The primary structure comprises 327 residues: Nuclear apoptosis-inducing factor 1 (327 aa).

Positions Met1–Lys70 are required for nuclear localization and apoptosis-inducing activity. Over residues Arg87–Pro98 the composition is skewed to low complexity. Disordered stretches follow at residues Arg87–Pro118 and Asn303–Gln327. The segment covering Ala104–Pro118 has biased composition (gly residues). The segment covering Val316–Gln327 has biased composition (polar residues).

Belongs to the NAIF1 family. In terms of assembly, interacts with HARBI1. In terms of tissue distribution, widely expressed.

Its subcellular location is the nucleus. In terms of biological role, induces apoptosis. This Homo sapiens (Human) protein is Nuclear apoptosis-inducing factor 1 (NAIF1).